Consider the following 582-residue polypeptide: Proline--tRNA ligase (582 aa).

It belongs to the class-II aminoacyl-tRNA synthetase family. ProS type 1 subfamily. Homodimer.

Its subcellular location is the cytoplasm. The catalysed reaction is tRNA(Pro) + L-proline + ATP = L-prolyl-tRNA(Pro) + AMP + diphosphate. Its function is as follows. Catalyzes the attachment of proline to tRNA(Pro) in a two-step reaction: proline is first activated by ATP to form Pro-AMP and then transferred to the acceptor end of tRNA(Pro). As ProRS can inadvertently accommodate and process non-cognate amino acids such as alanine and cysteine, to avoid such errors it has two additional distinct editing activities against alanine. One activity is designated as 'pretransfer' editing and involves the tRNA(Pro)-independent hydrolysis of activated Ala-AMP. The other activity is designated 'posttransfer' editing and involves deacylation of mischarged Ala-tRNA(Pro). The misacylated Cys-tRNA(Pro) is not edited by ProRS. This chain is Proline--tRNA ligase, found in Mycobacterium tuberculosis (strain CDC 1551 / Oshkosh).